The chain runs to 127 residues: Glycine cleavage system H protein (127 aa).

The region spanning 23–105 is the Lipoyl-binding domain; sequence KVSVGITDFA…YGEGWIAVIE (83 aa). The residue at position 64 (Lys64) is an N6-lipoyllysine.

Belongs to the GcvH family. In terms of assembly, the glycine cleavage system is composed of four proteins: P, T, L and H. The cofactor is (R)-lipoate.

Functionally, the glycine cleavage system catalyzes the degradation of glycine. The H protein shuttles the methylamine group of glycine from the P protein to the T protein. The sequence is that of Glycine cleavage system H protein from Coprothermobacter proteolyticus (strain ATCC 35245 / DSM 5265 / OCM 4 / BT).